A 176-amino-acid polypeptide reads, in one-letter code: ATP-dependent protease subunit HslV (176 aa).

The active site involves Thr-5. Na(+)-binding residues include Ala-161, Cys-164, and Thr-167.

Belongs to the peptidase T1B family. HslV subfamily. As to quaternary structure, a double ring-shaped homohexamer of HslV is capped on each side by a ring-shaped HslU homohexamer. The assembly of the HslU/HslV complex is dependent on binding of ATP.

It is found in the cytoplasm. It carries out the reaction ATP-dependent cleavage of peptide bonds with broad specificity.. Allosterically activated by HslU binding. Its function is as follows. Protease subunit of a proteasome-like degradation complex believed to be a general protein degrading machinery. The chain is ATP-dependent protease subunit HslV from Caldicellulosiruptor saccharolyticus (strain ATCC 43494 / DSM 8903 / Tp8T 6331).